Reading from the N-terminus, the 327-residue chain is Delta(6)-protoilludene synthase HYPSUDRAFT_138665 (327 aa).

Mg(2+) contacts are provided by Asp79, Asn215, Ser219, and Glu223. Residues 79 to 83 carry the DDXXD motif motif; the sequence is DEHTD. 2 residues coordinate (2E,6E)-farnesyl diphosphate: Arg304 and Tyr305.

The protein belongs to the terpene synthase family. Requires Mg(2+) as cofactor.

The enzyme catalyses (2E,6E)-farnesyl diphosphate = Delta(6)-protoilludene + diphosphate. Functionally, terpene cyclase that catalyzes the cyclization of farnesyl diphosphate (FPP) to delta(6)-protoilludene. The protein is Delta(6)-protoilludene synthase HYPSUDRAFT_138665 of Hypholoma sublateritium (strain FD-334 SS-4).